The chain runs to 89 residues: Small ribosomal subunit protein uS15 (89 aa).

This sequence belongs to the universal ribosomal protein uS15 family. Part of the 30S ribosomal subunit. Forms a bridge to the 50S subunit in the 70S ribosome, contacting the 23S rRNA.

One of the primary rRNA binding proteins, it binds directly to 16S rRNA where it helps nucleate assembly of the platform of the 30S subunit by binding and bridging several RNA helices of the 16S rRNA. Its function is as follows. Forms an intersubunit bridge (bridge B4) with the 23S rRNA of the 50S subunit in the ribosome. This Nocardia farcinica (strain IFM 10152) protein is Small ribosomal subunit protein uS15.